The chain runs to 696 residues: Polyribonucleotide nucleotidyltransferase (696 aa).

Mg(2+) contacts are provided by D486 and D492. The 60-residue stretch at 553–612 folds into the KH domain; that stretch reads PRIIVRNIPKDRIGELIGPGGKNVRGISELTGAELYIEDDGRVTISGSNQESAEKAAKMV. An S1 motif domain is found at 622–690; the sequence is GKIYEGKVKR…KTGKIDLSRK (69 aa).

It belongs to the polyribonucleotide nucleotidyltransferase family. Requires Mg(2+) as cofactor.

It is found in the cytoplasm. It catalyses the reaction RNA(n+1) + phosphate = RNA(n) + a ribonucleoside 5'-diphosphate. Functionally, involved in mRNA degradation. Catalyzes the phosphorolysis of single-stranded polyribonucleotides processively in the 3'- to 5'-direction. In Leptospira borgpetersenii serovar Hardjo-bovis (strain JB197), this protein is Polyribonucleotide nucleotidyltransferase.